Here is a 136-residue protein sequence, read N- to C-terminus: Small ribosomal subunit protein bS16 (136 aa).

Residues 114-123 are compositionally biased toward basic residues; the sequence is TLKARRRRAK. Residues 114 to 136 form a disordered region; that stretch reads TLKARRRRAKKEAEAASASSAEG.

This sequence belongs to the bacterial ribosomal protein bS16 family.

This chain is Small ribosomal subunit protein bS16, found in Chlorobium chlorochromatii (strain CaD3).